A 421-amino-acid chain; its full sequence is UDP-N-acetylglucosamine 1-carboxyvinyltransferase (421 aa).

22–23 (KN) is a phosphoenolpyruvate binding site. A UDP-N-acetyl-alpha-D-glucosamine-binding site is contributed by R93. The Proton donor role is filled by C117. C117 is modified (2-(S-cysteinyl)pyruvic acid O-phosphothioketal). UDP-N-acetyl-alpha-D-glucosamine is bound by residues 122 to 126 (RPVDL), D308, and V330.

It belongs to the EPSP synthase family. MurA subfamily.

The protein resides in the cytoplasm. It carries out the reaction phosphoenolpyruvate + UDP-N-acetyl-alpha-D-glucosamine = UDP-N-acetyl-3-O-(1-carboxyvinyl)-alpha-D-glucosamine + phosphate. The protein operates within cell wall biogenesis; peptidoglycan biosynthesis. Cell wall formation. Adds enolpyruvyl to UDP-N-acetylglucosamine. The sequence is that of UDP-N-acetylglucosamine 1-carboxyvinyltransferase from Ectopseudomonas mendocina (strain ymp) (Pseudomonas mendocina).